The primary structure comprises 399 residues: Elongation factor Tu (399 aa).

Residues 10 to 209 (KPHVNIGTIG…AVDSYIPTPV (200 aa)) form the tr-type G domain. The segment at 19–26 (GHVDHGKT) is G1. 19–26 (GHVDHGKT) contacts GTP. Thr-26 contacts Mg(2+). The interval 60–64 (GITIA) is G2. Residues 81-84 (DCPG) form a G3 region. GTP contacts are provided by residues 81–85 (DCPGH) and 136–139 (NKAD). Positions 136-139 (NKAD) are G4. The tract at residues 174–176 (SAL) is G5.

The protein belongs to the TRAFAC class translation factor GTPase superfamily. Classic translation factor GTPase family. EF-Tu/EF-1A subfamily. As to quaternary structure, monomer.

The protein resides in the cytoplasm. The catalysed reaction is GTP + H2O = GDP + phosphate + H(+). In terms of biological role, GTP hydrolase that promotes the GTP-dependent binding of aminoacyl-tRNA to the A-site of ribosomes during protein biosynthesis. This is Elongation factor Tu from Campylobacter concisus (strain 13826).